A 486-amino-acid chain; its full sequence is Betaine aldehyde dehydrogenase (486 aa).

K(+) is bound by residues Thr-23 and Asp-90. Position 147 to 149 (147 to 149 (GAW)) interacts with NAD(+). Lys-159 acts as the Charge relay system in catalysis. NAD(+)-binding positions include 173 to 176 (KPSE) and 226 to 229 (ESGT). Leu-241 is a binding site for K(+). Glu-247 acts as the Proton acceptor in catalysis. Residues Gly-249, Cys-281, and Glu-382 each contribute to the NAD(+) site. Cys-281 functions as the Nucleophile in the catalytic mechanism. Position 281 is a cysteine sulfenic acid (-SOH) (Cys-281). K(+) contacts are provided by Lys-452 and Gly-455. The active-site Charge relay system is Glu-459.

Belongs to the aldehyde dehydrogenase family. In terms of assembly, dimer of dimers. The cofactor is K(+).

It carries out the reaction betaine aldehyde + NAD(+) + H2O = glycine betaine + NADH + 2 H(+). It participates in amine and polyamine biosynthesis; betaine biosynthesis via choline pathway; betaine from betaine aldehyde: step 1/1. Functionally, involved in the biosynthesis of the osmoprotectant glycine betaine. Catalyzes the irreversible oxidation of betaine aldehyde to the corresponding acid. The chain is Betaine aldehyde dehydrogenase from Vibrio vulnificus (strain YJ016).